A 133-amino-acid polypeptide reads, in one-letter code: Small ribosomal subunit protein uS8 (133 aa).

The interval 1–28 (MANHDPISDMLTRIRNASEKRHEKTKVP) is disordered. A compositionally biased stretch (basic and acidic residues) spans 16-26 (NASEKRHEKTK).

The protein belongs to the universal ribosomal protein uS8 family. In terms of assembly, part of the 30S ribosomal subunit. Contacts proteins S5 and S12.

One of the primary rRNA binding proteins, it binds directly to 16S rRNA central domain where it helps coordinate assembly of the platform of the 30S subunit. This is Small ribosomal subunit protein uS8 from Prochlorococcus marinus (strain NATL1A).